Here is a 242-residue protein sequence, read N- to C-terminus: Placenta-expressed transcript 1 protein (242 aa).

Residues 1-26 form the signal peptide; the sequence is MAILRSLLLPLGLLLCLWLLCSPASC. Topologically, residues 27-220 are extracellular; that stretch reads TNSTTNCKPF…TTHKSSANRA (194 aa). Residues Asn28, Asn81, and Asn106 are each glycosylated (N-linked (GlcNAc...) asparagine). The tract at residues 162 to 209 is disordered; sequence VITTPTHKPTPAPPKPTTNPQKTTTNHSIPTTSLPKPTTSLYTSHPKL. Residues 169–178 are compositionally biased toward pro residues; it reads KPTPAPPKPT. Residues 179–205 are compositionally biased toward low complexity; the sequence is TNPQKTTTNHSIPTTSLPKPTTSLYTS. Residues 221–241 form a helical membrane-spanning segment; it reads FLCPVREAIQILFIFLIGTLL. A topological domain (cytoplasmic) is located at residue Phe242.

N-glycosylated.

Its subcellular location is the membrane. The protein localises to the apical cell membrane. Modulates leading keratinocyte migration and cellular adhesion to matrix proteins during a wound-healing response and promotes wound repair. May play a role during trichilemmal differentiation of the hair follicle. The chain is Placenta-expressed transcript 1 protein (PLET1) from Bos taurus (Bovine).